The following is a 301-amino-acid chain: tRNA dimethylallyltransferase (301 aa).

9–16 is a binding site for ATP; that stretch reads GPTASGKS. 11-16 is a substrate binding site; that stretch reads TASGKS. The tract at residues 34-37 is interaction with substrate tRNA; it reads DSMQ.

The protein belongs to the IPP transferase family. In terms of assembly, monomer. Mg(2+) serves as cofactor.

The enzyme catalyses adenosine(37) in tRNA + dimethylallyl diphosphate = N(6)-dimethylallyladenosine(37) in tRNA + diphosphate. Its function is as follows. Catalyzes the transfer of a dimethylallyl group onto the adenine at position 37 in tRNAs that read codons beginning with uridine, leading to the formation of N6-(dimethylallyl)adenosine (i(6)A). This chain is tRNA dimethylallyltransferase, found in Corynebacterium efficiens (strain DSM 44549 / YS-314 / AJ 12310 / JCM 11189 / NBRC 100395).